A 306-amino-acid chain; its full sequence is Ornithine carbamoyltransferase, anabolic (306 aa).

Residues 46–49 (STRT), Gln73, Arg97, and 124–127 (HPTQ) contribute to the carbamoyl phosphate site. L-ornithine contacts are provided by residues Asn156, Asp220, and 224–225 (SM). Carbamoyl phosphate contacts are provided by residues 260–261 (CL) and Arg288.

The protein belongs to the aspartate/ornithine carbamoyltransferase superfamily. OTCase family. In terms of assembly, homohexamer; dimer of trimers.

It localises to the cytoplasm. The enzyme catalyses carbamoyl phosphate + L-ornithine = L-citrulline + phosphate + H(+). It functions in the pathway amino-acid biosynthesis; L-arginine biosynthesis; L-arginine from L-ornithine and carbamoyl phosphate: step 1/3. Reversibly catalyzes the transfer of the carbamoyl group from carbamoyl phosphate (CP) to the N(epsilon) atom of ornithine (ORN) to produce L-citrulline, which is a substrate for argininosuccinate synthetase (ArgG) involved in the final step in arginine biosynthesis. The polypeptide is Ornithine carbamoyltransferase, anabolic (Campylobacter jejuni subsp. jejuni serotype O:2 (strain ATCC 700819 / NCTC 11168)).